We begin with the raw amino-acid sequence, 34 residues long: Potassium channel toxin alpha-KTx 6.13 (34 aa).

4 disulfides stabilise this stretch: Cys3-Cys24, Cys9-Cys29, Cys13-Cys31, and Cys19-Cys34. Cys34 is modified (cysteine amide).

It belongs to the short scorpion toxin superfamily. Potassium channel inhibitor family. Alpha-KTx 06 subfamily. Expressed by the venom gland.

It is found in the secreted. Functionally, antagonist of Kv1/KCNA potassium channels. Shows a weak interaction with muscle-type nicotinic acetylcholine receptors (nAChR), since it inhibits alpha-bungarotoxin binding to both muscle-type nAChR from T.californica (IC(50)=490 nM). This suggests it probably weakly inhibits nAChR. This chain is Potassium channel toxin alpha-KTx 6.13, found in Heterometrus spinifer (Asia giant forest scorpion).